A 248-amino-acid polypeptide reads, in one-letter code: Agamous-like MADS-box protein AGL1 (248 aa).

Residues 18-72 (RGKIEIKRIENTTNRQVTFCKRRNGLLKKAYELSVLCDAEVALVIFSTRGRLYEY) enclose the MADS-box domain. A K-box domain is found at 102–192 (TQYYQQEASK…RAKIAEGARL (91 aa)).

As to quaternary structure, interacts with AGL15 and AGL16.

The protein localises to the nucleus. Its function is as follows. Probable transcription factor. Interacts genetically with TT16/AGL32 in a partially antagonistic manner during flower development. Is essential for the coordination of cell divisions in ovule, seed coat development and endosperm formation. The protein is Agamous-like MADS-box protein AGL1 (AGL1) of Arabidopsis thaliana (Mouse-ear cress).